We begin with the raw amino-acid sequence, 128 residues long: Large ribosomal subunit protein bL12 (128 aa).

Belongs to the bacterial ribosomal protein bL12 family. Homodimer. Part of the ribosomal stalk of the 50S ribosomal subunit. Forms a multimeric L10(L12)X complex, where L10 forms an elongated spine to which 2 to 4 L12 dimers bind in a sequential fashion. Binds GTP-bound translation factors.

In terms of biological role, forms part of the ribosomal stalk which helps the ribosome interact with GTP-bound translation factors. Is thus essential for accurate translation. This Halorhodospira halophila (strain DSM 244 / SL1) (Ectothiorhodospira halophila (strain DSM 244 / SL1)) protein is Large ribosomal subunit protein bL12.